The chain runs to 266 residues: Putative carbamate hydrolase RutD (266 aa).

It belongs to the AB hydrolase superfamily. Hydrolase RutD family.

The catalysed reaction is carbamate + 2 H(+) = NH4(+) + CO2. Involved in pyrimidine catabolism. May facilitate the hydrolysis of carbamate, a reaction that can also occur spontaneously. This is Putative carbamate hydrolase RutD from Escherichia coli O103:H2 (strain 12009 / EHEC).